Reading from the N-terminus, the 212-residue chain is 3-isopropylmalate dehydratase small subunit 1 (212 aa).

It belongs to the LeuD family. LeuD type 1 subfamily. In terms of assembly, heterodimer of LeuC and LeuD.

It carries out the reaction (2R,3S)-3-isopropylmalate = (2S)-2-isopropylmalate. It participates in amino-acid biosynthesis; L-leucine biosynthesis; L-leucine from 3-methyl-2-oxobutanoate: step 2/4. Its function is as follows. Catalyzes the isomerization between 2-isopropylmalate and 3-isopropylmalate, via the formation of 2-isopropylmaleate. This Chromobacterium violaceum (strain ATCC 12472 / DSM 30191 / JCM 1249 / CCUG 213 / NBRC 12614 / NCIMB 9131 / NCTC 9757 / MK) protein is 3-isopropylmalate dehydratase small subunit 1.